The primary structure comprises 272 residues: Transcription factor GAL1 (272 aa).

The span at methionine 1–leucine 10 shows a compositional bias: polar residues. Disordered regions lie at residues methionine 1 to threonine 49, tyrosine 102 to isoleucine 215, and lysine 246 to tyrosine 272. 2 stretches are compositionally biased toward acidic residues: residues glutamate 113–glutamine 122 and serine 152–glutamate 174. Residues leucine 175–isoleucine 215 show a composition bias toward basic and acidic residues. The CCHC-type zinc-finger motif lies at cysteine 240 to aspartate 255.

The protein localises to the nucleus. Its function is as follows. Transcription factor; part of the gene cluster that mediates the biosynthesis of liamocins, glycolipids (also called heavy oils) composed of a single mannitol or arabitol headgroup linked to either three, four or even six 3,5-dihydroxydecanoic ester tail-groups. Positively regulates the expression of PKS1 and EST1 that mediate the biosynthesis of liamocins. The protein is Transcription factor GAL1 of Aureobasidium melanogenum (Aureobasidium pullulans var. melanogenum).